The primary structure comprises 669 residues: RNA-binding protein 14 (669 aa).

RRM domains lie at M1–P73 and W79–K149. Glycyl lysine isopeptide (Lys-Gly) (interchain with G-Cter in SUMO2) cross-links involve residues K126, K135, K138, K149, and K153. 2 disordered regions span residues S147–F175 and N193–A232. A Phosphoserine modification is found at S161. The residue at position 164 (K164) is an N6-acetyllysine; alternate. A Glycyl lysine isopeptide (Lys-Gly) (interchain with G-Cter in SUMO2); alternate cross-link involves residue K164. T206 carries the post-translational modification Phosphothreonine. Phosphoserine occurs at positions 220, 242, 244, 256, 272, and 280. Positions P284–G303 are disordered. Low complexity predominate over residues G287 to G303. The interval G307–S354 is TRBP-interacting domain; interaction with STIL. 4 positions are modified to phosphoserine: S520, S523, S527, and S562. Residues V566–D590 form a disordered region. T572 carries the post-translational modification Phosphothreonine. The residue at position 582 (S582) is a Phosphoserine. K600 is covalently cross-linked (Glycyl lysine isopeptide (Lys-Gly) (interchain with G-Cter in SUMO2)). Residues S618, S620, S623, S627, S643, and S649 each carry the phosphoserine modification.

Isoform 1: Interacts with NCOA6, CITED1 and XRCC5/KU86. Isoform 1: Interacts with SS18 isoform 1. Isoform 1: Interacts with SS18 isoform 2. Interacts with STIL and interferes with its interaction with CPAP. Interacts with gamma-tubulin. Part of the HDP-RNP complex composed of at least HEXIM1, PRKDC, XRCC5, XRCC6, paraspeckle proteins (SFPQ, NONO, PSPC1, RBM14, and MATR3) and NEAT1 RNA. Interacts with RBPMS; the interaction allows cooperative assembly of RNA-bound stable cell-specific alternative splicing regulatory complexes. In terms of tissue distribution, expressed in all tissues tested, including brain, heart, skeletal muscle, colon, thymus, spleen, kidney, liver, small intestine, placenta, lung and peripheral blood lymphocytes.

It is found in the nucleus. It localises to the nucleolus. The protein resides in the cytoplasm. In terms of biological role, isoform 1 may function as a nuclear receptor coactivator, enhancing transcription through other coactivators such as NCOA6 and CITED1. Isoform 2, functions as a transcriptional repressor, modulating transcriptional activities of coactivators including isoform 1, NCOA6 and CITED1. Regulates centriole biogenesis by suppressing the formation of aberrant centriolar protein complexes in the cytoplasm and thus preserving mitotic spindle integrity. Prevents the formation of the STIL-CPAP complex (which can induce the formation of aberrant centriolar protein complexes) by interfering with the interaction of STIL with CPAP. Plays a role in the regulation of DNA virus-mediated innate immune response by assembling into the HDP-RNP complex, a complex that serves as a platform for IRF3 phosphorylation and subsequent innate immune response activation through the cGAS-STING pathway. Also involved in the regulation of pre-mRNA alternative splicing. This chain is RNA-binding protein 14 (RBM14), found in Homo sapiens (Human).